The primary structure comprises 212 residues: Probable GTP-binding protein EngB (212 aa).

The region spanning 23-197 (TGIEVAFAGR…ERILDGWFGL (175 aa)) is the EngB-type G domain. Residues 31–38 (GRSNAGKS), 58–62 (GRTQL), 76–79 (DLPG), 143–146 (TKAD), and 176–178 (FSS) contribute to the GTP site. Ser38 and Thr60 together coordinate Mg(2+).

It belongs to the TRAFAC class TrmE-Era-EngA-EngB-Septin-like GTPase superfamily. EngB GTPase family. The cofactor is Mg(2+).

Functionally, necessary for normal cell division and for the maintenance of normal septation. In Alteromonas mediterranea (strain DSM 17117 / CIP 110805 / LMG 28347 / Deep ecotype), this protein is Probable GTP-binding protein EngB.